A 123-amino-acid chain; its full sequence is MSSDVAGVKKSSSSSSSTSSPFMFSMLLMFSRSISSTIKISANRILLCCTSSFSTTSGFFKIESNRLTSRSSSGIFSRTACNRSCGNCFSISAVLSFCVAPLCCKSTGRFSSAIYLLIFRSTR.

This is an uncharacterized protein from Saccharomyces cerevisiae (strain ATCC 204508 / S288c) (Baker's yeast).